The chain runs to 203 residues: Transmembrane emp24 domain-containing protein (203 aa).

The N-terminal stretch at 1-22 (MASIRLLPSCIVLMFLARSSLC) is a signal peptide. Topologically, residues 23-170 (YFITIDAHGE…RSINDNTNSR (148 aa)) are lumenal. Residues 32–114 (EECFHDKVTS…PKVLKFSMDI (83 aa)) form the GOLD domain. The helical transmembrane segment at 171 to 191 (VVWWSFFESLVLVAMTLGQVY) threads the bilayer. The Cytoplasmic portion of the chain corresponds to 192–203 (YLKRFFEVRRVV).

Belongs to the EMP24/GP25L family.

Its subcellular location is the cytoplasmic vesicle membrane. Its function is as follows. Could have a role in the budding of coatomer-coated and other species of coated vesicles. The sequence is that of Transmembrane emp24 domain-containing protein from Nematostella vectensis (Starlet sea anemone).